The following is a 307-amino-acid chain: UDP-N-acetylenolpyruvoylglucosamine reductase (307 aa).

The region spanning 34 to 197 (VGGNAEALFR…LSASLKGRPG (164 aa)) is the FAD-binding PCMH-type domain. Arg-177 is an active-site residue. Ser-226 serves as the catalytic Proton donor. Glu-296 is a catalytic residue.

The protein belongs to the MurB family. The cofactor is FAD.

The protein resides in the cytoplasm. It carries out the reaction UDP-N-acetyl-alpha-D-muramate + NADP(+) = UDP-N-acetyl-3-O-(1-carboxyvinyl)-alpha-D-glucosamine + NADPH + H(+). It participates in cell wall biogenesis; peptidoglycan biosynthesis. Its function is as follows. Cell wall formation. The protein is UDP-N-acetylenolpyruvoylglucosamine reductase of Paramagnetospirillum magneticum (strain ATCC 700264 / AMB-1) (Magnetospirillum magneticum).